The chain runs to 242 residues: DNA repair protein RecO (242 aa).

This sequence belongs to the RecO family.

In terms of biological role, involved in DNA repair and RecF pathway recombination. In Nitrosospira multiformis (strain ATCC 25196 / NCIMB 11849 / C 71), this protein is DNA repair protein RecO.